The chain runs to 652 residues: Carboxypeptidase S1 homolog A (652 aa).

A signal peptide spans 1–19; sequence MRFAASIAVALPVIHAASA. The cysteines at positions 50 and 121 are disulfide-linked. N-linked (GlcNAc...) asparagine glycans are attached at residues Asn77, Asn132, Asn161, Asn168, Asn184, and Asn202. Ser238 is a catalytic residue. Asn260, Asn299, Asn347, and Asn410 each carry an N-linked (GlcNAc...) asparagine glycan. Cystine bridges form between Cys325/Cys361 and Cys332/Cys354. Residue Asp458 is part of the active site. Cys461 is a binding site for substrate. N-linked (GlcNAc...) asparagine glycosylation is found at Asn474, Asn492, and Asn505. His516 is an active-site residue. Glu517 is a substrate binding site. Residues 608 to 627 are disordered; the sequence is AASKGNPPPTTTSSPTAAPT. Residues 618-627 show a composition bias toward low complexity; that stretch reads TTSSPTAAPT. A lipid anchor (GPI-anchor amidated glycine) is attached at Gly629. Residues 630–652 constitute a propeptide, removed in mature form; sequence SAMLKAPVAMLAISALTVLAFFL.

It belongs to the peptidase S10 family.

Its subcellular location is the cell membrane. The catalysed reaction is Preferential release of a C-terminal arginine or lysine residue.. Functionally, extracellular serine carboxypeptidase that contributes to pathogenicity. This chain is Carboxypeptidase S1 homolog A (SCPA), found in Trichophyton rubrum (Athlete's foot fungus).